A 491-amino-acid polypeptide reads, in one-letter code: Cholesterol 22-monohydroxylase CYP90B51 (491 aa).

A helical transmembrane segment spans residues 6-26 (ITFYCLSSILSVLLIFIFILI). Cysteine 437 provides a ligand contact to heme.

Belongs to the cytochrome P450 family. In terms of tissue distribution, mainly expressed in leaves and seed pods and, to a lower extent, in flowers and stems.

The protein localises to the membrane. It catalyses the reaction cholesterol + reduced [NADPH--hemoprotein reductase] + O2 = (22S)-22-hydroxycholesterol + oxidized [NADPH--hemoprotein reductase] + H2O + H(+). The protein operates within steroid metabolism; cholesterol metabolism. Functionally, canonical brassinosteroid (BR)-biosynthetic enzyme capable of converting cholesterol to 22S-hydroxycholesterol via sterol-C22 hydroxylation. The polypeptide is Cholesterol 22-monohydroxylase CYP90B51 (Trigonella foenum-graecum (Fenugreek)).